Consider the following 375-residue polypeptide: Aminomethyltransferase (375 aa).

The protein belongs to the GcvT family. The glycine cleavage system is composed of four proteins: P, T, L and H.

It catalyses the reaction N(6)-[(R)-S(8)-aminomethyldihydrolipoyl]-L-lysyl-[protein] + (6S)-5,6,7,8-tetrahydrofolate = N(6)-[(R)-dihydrolipoyl]-L-lysyl-[protein] + (6R)-5,10-methylene-5,6,7,8-tetrahydrofolate + NH4(+). In terms of biological role, the glycine cleavage system catalyzes the degradation of glycine. The polypeptide is Aminomethyltransferase (Symbiobacterium thermophilum (strain DSM 24528 / JCM 14929 / IAM 14863 / T)).